We begin with the raw amino-acid sequence, 92 residues long: Small ribosomal subunit protein uS19c (92 aa).

Belongs to the universal ribosomal protein uS19 family.

It is found in the plastid. The protein localises to the chloroplast. Protein S19 forms a complex with S13 that binds strongly to the 16S ribosomal RNA. This chain is Small ribosomal subunit protein uS19c, found in Dioscorea elephantipes (Elephant's foot yam).